The sequence spans 156 residues: Translationally controlled tumor protein 2 (156 aa).

A TCTP domain is found at 1-156 (MLVYQDILTG…LAYGLKEIKC (156 aa)).

This sequence belongs to the TCTP family. In terms of tissue distribution, expressed in stems, cauline leaves, minor veins of rosette leaves, roots, lateral root primordia, vascular tissues of petioles and inflorescences, base of siliques, papillae and ovules. Not detected in root meristems, anthers or seeds. Expressed in stomata, trichomes and root cortex.

It is found in the nucleus. It localises to the cytoplasm. Regulates proliferation. Induces whole plant regeneration when expressed in heterologous systems. Involved in root growth and lateral root development, with a probable role in cell reprogramming. The long-distance transport of TCTP RNA and/or protein in plants may have an important role in regulation of growth and development. This is Translationally controlled tumor protein 2 from Arabidopsis thaliana (Mouse-ear cress).